A 431-amino-acid chain; its full sequence is Nuclear bridge Ish domain protein les1 (431 aa).

The signal sequence occupies residues 1–21; the sequence is MQPRFLLHGALLALGIQLCLS.

It is found in the nucleus inner membrane. Inner nuclear envelope protein involved in nuclear fission, which is achieved via local disassembly of nuclear pores within the narrow bridge that links segregating daughter nuclei. Les1 restricts the process of local nuclear envelope breakdown to the bridge midzone to prevent the leakage of material from daughter nuclei during mitosis. This Schizosaccharomyces pombe (strain 972 / ATCC 24843) (Fission yeast) protein is Nuclear bridge Ish domain protein les1.